The chain runs to 92 residues: MEVKTFAFLQIAVLIALGLHLAPAGSNQLSGPQSSANSNEAVFCDTNCTQGTDEAWSGCRGDCFCVYVGNSTEGRCMMLSGDFDYSTPGAED.

The signal sequence occupies residues 1–26; it reads MEVKTFAFLQIAVLIALGLHLAPAGS. 3 disulfides stabilise this stretch: Cys-44/Cys-63, Cys-48/Cys-65, and Cys-59/Cys-76. The N-linked (GlcNAc...) asparagine glycan is linked to Asn-47. N-linked (GlcNAc...) asparagine glycosylation occurs at Asn-70.

It localises to the secreted. In terms of biological role, salivary chemokine-binding protein which binds to host chemokines CXCL1, CXCL2, CXCL3, CXCL4, CXCL5, CXCL6, CXCL10, CXCL11 and CXCL13. The polypeptide is Evasin P942 (Ixodes ricinus (Common tick)).